We begin with the raw amino-acid sequence, 626 residues long: Probable metalloendopeptidase G1-type (626 aa).

His42 contacts Zn(2+). Glu45 is a catalytic residue. His46 lines the Zn(2+) pocket.

Belongs to the peptidase M44 family. Requires Zn(2+) as cofactor.

In terms of biological role, seems to be involved in viral proteins maturation by cleavage at Ala-Gly-|-Xaa motifs. The chain is Probable metalloendopeptidase G1-type from Fowlpox virus (strain NVSL) (FPV).